The sequence spans 274 residues: tRNA dimethylallyltransferase (274 aa).

The interval D9–S12 is interaction with substrate tRNA.

It belongs to the IPP transferase family. In terms of assembly, monomer. Requires Mg(2+) as cofactor.

The enzyme catalyses adenosine(37) in tRNA + dimethylallyl diphosphate = N(6)-dimethylallyladenosine(37) in tRNA + diphosphate. Its function is as follows. Catalyzes the transfer of a dimethylallyl group onto the adenine at position 37 in tRNAs that read codons beginning with uridine, leading to the formation of N6-(dimethylallyl)adenosine (i(6)A). The chain is tRNA dimethylallyltransferase (miaA) from Helicobacter pylori (strain P12).